Consider the following 315-residue polypeptide: Acetyl-coenzyme A carboxylase carboxyl transferase subunit alpha (315 aa).

The region spanning 32–289 is the CoA carboxyltransferase C-terminal domain; sequence EIDLLEASLE…KQAFVDQLEQ (258 aa).

Belongs to the AccA family. As to quaternary structure, acetyl-CoA carboxylase is a heterohexamer composed of biotin carboxyl carrier protein (AccB), biotin carboxylase (AccC) and two subunits each of ACCase subunit alpha (AccA) and ACCase subunit beta (AccD).

Its subcellular location is the cytoplasm. The enzyme catalyses N(6)-carboxybiotinyl-L-lysyl-[protein] + acetyl-CoA = N(6)-biotinyl-L-lysyl-[protein] + malonyl-CoA. The protein operates within lipid metabolism; malonyl-CoA biosynthesis; malonyl-CoA from acetyl-CoA: step 1/1. Component of the acetyl coenzyme A carboxylase (ACC) complex. First, biotin carboxylase catalyzes the carboxylation of biotin on its carrier protein (BCCP) and then the CO(2) group is transferred by the carboxyltransferase to acetyl-CoA to form malonyl-CoA. The polypeptide is Acetyl-coenzyme A carboxylase carboxyl transferase subunit alpha (Staphylococcus haemolyticus (strain JCSC1435)).